The primary structure comprises 428 residues: Hydrolase acrC (428 aa).

S248 is an active-site residue.

Belongs to the AB hydrolase superfamily. FUS2 hydrolase family.

The protein operates within secondary metabolite biosynthesis. Hydrolase; part of the cluster that mediates the biosynthesis of acurin A, a highly reduced polyketide coupled to a serine via a peptide bond. The activities of the highly reducing polyketide synthase acrA and the nonribosomal peptide synthetase acrB are collectively responsible for the synthesis of the acurin A core structure with a heptaketide backbone produced by acrA covalently fused to a L-serine by acrB. After the formation of the PK-NRP hybrid product, it is detached from acrB by reductive release to set up the formation of the lactam ring by aldol condensation. The hydrolyase acrC then catalyzes water loss to generate a double bond in the ring. This double bond is probably reduced, which is followed by three oxidations at C-22 to generate the carboxylic acid moiety, involving probably the FAD-binding monooxygenase acrE and the cytochrome P450 monooxygenases acrD and acrF. Finally, a last methylation step performed by the O-methyltransferase acrG leads to the production of acurin A. The protein is Hydrolase acrC of Aspergillus aculeatus (strain ATCC 16872 / CBS 172.66 / WB 5094).